Here is a 448-residue protein sequence, read N- to C-terminus: Tubulin beta-2 chain (448 aa).

GTP is bound by residues glutamine 11, glutamate 69, serine 138, glycine 142, threonine 143, glycine 144, asparagine 204, and asparagine 226. Glutamate 69 provides a ligand contact to Mg(2+). The segment at 421–448 (EYQQYQDATADEDGEYEDELDGQEEEDM) is disordered. Over residues 429-448 (TADEDGEYEDELDGQEEEDM) the composition is skewed to acidic residues.

It belongs to the tubulin family. As to quaternary structure, dimer of alpha and beta chains. A typical microtubule is a hollow water-filled tube with an outer diameter of 25 nm and an inner diameter of 15 nM. Alpha-beta heterodimers associate head-to-tail to form protofilaments running lengthwise along the microtubule wall with the beta-tubulin subunit facing the microtubule plus end conferring a structural polarity. Microtubules usually have 13 protofilaments but different protofilament numbers can be found in some organisms and specialized cells. The cofactor is Mg(2+).

Its subcellular location is the cytoplasm. It is found in the cytoskeleton. Its function is as follows. Tubulin is the major constituent of microtubules, a cylinder consisting of laterally associated linear protofilaments composed of alpha- and beta-tubulin heterodimers. Microtubules grow by the addition of GTP-tubulin dimers to the microtubule end, where a stabilizing cap forms. Below the cap, tubulin dimers are in GDP-bound state, owing to GTPase activity of alpha-tubulin. This chain is Tubulin beta-2 chain (TUBB2), found in Eleusine indica (Goosegrass).